A 431-amino-acid chain; its full sequence is Chaperone SurA (431 aa).

The signal sequence occupies residues M1–A20. 2 PpiC domains span residues G171 to D272 and V282 to D382.

The protein localises to the periplasm. It carries out the reaction [protein]-peptidylproline (omega=180) = [protein]-peptidylproline (omega=0). Its function is as follows. Chaperone involved in the correct folding and assembly of outer membrane proteins. Recognizes specific patterns of aromatic residues and the orientation of their side chains, which are found more frequently in integral outer membrane proteins. May act in both early periplasmic and late outer membrane-associated steps of protein maturation. This is Chaperone SurA from Sodalis glossinidius (strain morsitans).